The following is a 127-amino-acid chain: Major sperm protein 38 (127 aa).

Alanine 2 carries the post-translational modification N-acetylalanine. The 118-residue stretch at aspartate 9 to asparagine 126 folds into the MSP domain.

As to expression, sperm.

It is found in the cell projection. The protein resides in the pseudopodium. Its subcellular location is the cytoplasm. It localises to the cytoskeleton. Its function is as follows. Central component in molecular interactions underlying sperm crawling. Forms an extensive filament system that extends from sperm villipoda, along the leading edge of the pseudopod. This Caenorhabditis elegans protein is Major sperm protein 38 (msp-38).